The following is a 280-amino-acid chain: Phosphatidylglycerol--prolipoprotein diacylglyceryl transferase (280 aa).

4 helical membrane passes run 23 to 43 (LRWYGLMYLVGFAAAFWLAGV), 58 to 78 (LLFWGFLGVILGGRIGYVLFY), 93 to 113 (IWTGGMSFHGGLLGVIAALWW), and 120 to 140 (CTFLQVGDFIAPLVPIGLGAG). Arg-141 contacts a 1,2-diacyl-sn-glycero-3-phospho-(1'-sn-glycerol). The next 3 helical transmembrane spans lie at 173 to 193 (PSQLYEFALEGVVLFLILWLY), 200 to 220 (IGAVSGLFLLGYGSFRFFVEF), and 241 to 261 (QGQILSAPMIIGGIALMVWAV).

This sequence belongs to the Lgt family.

Its subcellular location is the cell inner membrane. It carries out the reaction L-cysteinyl-[prolipoprotein] + a 1,2-diacyl-sn-glycero-3-phospho-(1'-sn-glycerol) = an S-1,2-diacyl-sn-glyceryl-L-cysteinyl-[prolipoprotein] + sn-glycerol 1-phosphate + H(+). It participates in protein modification; lipoprotein biosynthesis (diacylglyceryl transfer). Catalyzes the transfer of the diacylglyceryl group from phosphatidylglycerol to the sulfhydryl group of the N-terminal cysteine of a prolipoprotein, the first step in the formation of mature lipoproteins. This chain is Phosphatidylglycerol--prolipoprotein diacylglyceryl transferase, found in Pseudoalteromonas atlantica (strain T6c / ATCC BAA-1087).